Reading from the N-terminus, the 620-residue chain is MALLQIAEPGQSAAPHQHRLAVGIDLGTTNSLVAAVRSGVADTLADESGRHALASVVRYSEDGVQVGVDAERFSAQDPLNTVVSVKRFMGRSLSDIQAKDASLPYNFSASENGLPLFNTQAGQFNPIQISADILRPLVDRAEKTLGGSLEGVVITVPAYFDDAQRQGTKEAASLLGVKVLRLLNEPTAAAIAYGLDSGQEGVIAIYDLGGGTFDISILRLNKGVFEVLATGGDSALGGDDFDHALAAHLQESWQLTSLTASERRALLIESRRVKEALTEQASVTASLTLEQGIVHEQVVDKAQFDALIESLVKKTIASCRRALRDAAISNDEVLETVMVGGSTRVPLVRERVEGFFGKAPLTSIDPDRVVAIGAAIQADILVGNKPESDLLLLDVIPLSLGIETMGGLVEKVVSRNTTIPVARAQEFTTFKDGQTAMAFHVVQGERELVADCRSLARFTLKGIPPMAAGAAHIRVTFQVDADGLLSVTAMEKSSGVQASIQVKPSFGLTDEEIGTMLKDSMAHAKEDIERRMLAEQQVEAARVLESLSAALAKDGDLLDEAEAATIQAGMANLAQVASQSDTDAIEKAIAALDDASQDFAAKRMDNSIRLALKGQSVDNI.

This sequence belongs to the heat shock protein 70 family.

In terms of biological role, chaperone involved in the maturation of iron-sulfur cluster-containing proteins. Has a low intrinsic ATPase activity which is markedly stimulated by HscB. In Shewanella loihica (strain ATCC BAA-1088 / PV-4), this protein is Chaperone protein HscA homolog.